Here is a 1213-residue protein sequence, read N- to C-terminus: Genetic suppressor element 1 (1213 aa).

Residues 1 to 154 (MKGMSHEPKS…GSRGSSSGRE (154 aa)) form a disordered region. Ser-10 is modified (phosphoserine). Residues 15-33 (MLSTATRTTATVNPLTPSP) show a composition bias toward polar residues. Low complexity-rich tracts occupy residues 51–63 (SAQA…FAAA) and 76–89 (GSSL…VSSP). Phosphoserine is present on residues Ser-84 and Ser-95. Positions 103–114 (VPMGPIIVPPGG) are enriched in low complexity. Arg-305 bears the Asymmetric dimethylarginine mark. Residues 319-402 (HSERMSSLSA…REKELLAAKA (84 aa)) adopt a coiled-coil conformation. The interval 326 to 384 (LSAERLQMDEELRREREREREREREADREREKEREREQREKEREKELEREREKEREREL) is disordered. The span at 331–384 (LQMDEELRREREREREREREADREREKEREREQREKEREKELEREREKEREREL) shows a compositional bias: basic and acidic residues. A Phosphothreonine modification is found at Thr-433. The residue at position 496 (Lys-496) is an N6-acetyllysine. Disordered regions lie at residues 527 to 579 (LDLG…QHTV) and 630 to 719 (SEKA…TARG). Composition is skewed to basic and acidic residues over residues 537 to 560 (EAEH…REPP) and 630 to 643 (SEKA…EATP). Over residues 648-657 (QPPPPPPPPR) the composition is skewed to pro residues. A compositionally biased stretch (polar residues) spans 681–700 (STQTILGQQRPSLSQATSFG). Lys-739 carries the N6-acetyllysine modification. Phosphoserine is present on residues Ser-766, Ser-826, Ser-828, and Ser-857. 3 disordered regions span residues 816–858 (RKRR…NNSP), 898–979 (LSAA…EAPG), and 1065–1118 (ELQS…PRRQ). The span at 847–858 (TRYSPDEMNNSP) shows a compositional bias: polar residues. Thr-905 carries the phosphothreonine modification. Ser-907 is modified (phosphoserine). A compositionally biased stretch (polar residues) spans 1065 to 1081 (ELQSSSRVPLPQHNGQQ). A coiled-coil region spans residues 1093 to 1197 (QEADQDSEED…ELDHLRKCLA (105 aa)). Acidic residues predominate over residues 1095 to 1112 (ADQDSEEDSEEDSEEEAE). Residue Ser-1099 is modified to Phosphoserine.

As to quaternary structure, may be a component of a BHC histone deacetylase complex that contains HDAC1, HDAC2, HMG20B/BRAF35, KDM1A, RCOR1/CoREST, PHF21A/BHC80, ZMYM2, ZNF217, ZMYM3, GSE1 and GTF2I.

In Mus musculus (Mouse), this protein is Genetic suppressor element 1 (Gse1).